The sequence spans 204 residues: Per os infectivity factor 3 (204 aa).

As to quaternary structure, forms the PIF complex together with PIF1 and PIF2. The complex also interacts with per os infectivity factor PIF0.

Functionally, per os factor that plays a role in the initiation of host midgut infection. Unlike PIF1 and PIF2, PIF3 is not involved in specific binding of occluded virions (ODV) to the host midgut target cells. This Lepidoptera (butterflies and moths) protein is Per os infectivity factor 3 (AC115).